The primary structure comprises 251 residues: Triosephosphate isomerase (251 aa).

Residue 9-11 (NWK) participates in substrate binding. H95 acts as the Electrophile in catalysis. E167 (proton acceptor) is an active-site residue. Substrate is bound by residues G173, S213, and 234-235 (GG).

This sequence belongs to the triosephosphate isomerase family. As to quaternary structure, homodimer.

The protein localises to the cytoplasm. It carries out the reaction D-glyceraldehyde 3-phosphate = dihydroxyacetone phosphate. Its pathway is carbohydrate biosynthesis; gluconeogenesis. The protein operates within carbohydrate degradation; glycolysis; D-glyceraldehyde 3-phosphate from glycerone phosphate: step 1/1. In terms of biological role, involved in the gluconeogenesis. Catalyzes stereospecifically the conversion of dihydroxyacetone phosphate (DHAP) to D-glyceraldehyde-3-phosphate (G3P). This Carboxydothermus hydrogenoformans (strain ATCC BAA-161 / DSM 6008 / Z-2901) protein is Triosephosphate isomerase.